A 104-amino-acid chain; its full sequence is Small ribosomal subunit protein bS16 (104 aa).

This sequence belongs to the bacterial ribosomal protein bS16 family.

This chain is Small ribosomal subunit protein bS16, found in Wolbachia pipientis subsp. Culex pipiens (strain wPip).